A 273-amino-acid polypeptide reads, in one-letter code: Eukaryotic translation initiation factor 3 subunit G-2 (273 aa).

Residues 165 to 193 form a disordered region; it reads KYVPPFMKDGGGGPGGKNWGRGRERDDSS. Residues 173 to 183 are compositionally biased toward gly residues; it reads DGGGGPGGKNW. One can recognise an RRM domain in the interval 193 to 271; sequence SAVRISNLSE…LILCVEWSKP (79 aa).

This sequence belongs to the eIF-3 subunit G family. As to quaternary structure, component of the eukaryotic translation initiation factor 3 (eIF-3) complex. The eIF-3 complex interacts with pix.

The protein localises to the cytoplasm. Functionally, RNA-binding component of the eukaryotic translation initiation factor 3 (eIF-3) complex, which is involved in protein synthesis of a specialized repertoire of mRNAs and, together with other initiation factors, stimulates binding of mRNA and methionyl-tRNAi to the 40S ribosome. The eIF-3 complex specifically targets and initiates translation of a subset of mRNAs involved in cell proliferation. This subunit can bind 18S rRNA. In Drosophila yakuba (Fruit fly), this protein is Eukaryotic translation initiation factor 3 subunit G-2.